A 2492-amino-acid chain; its full sequence is Polyketide synthase 19 (2492 aa).

The Ketosynthase family 3 (KS3) domain occupies 12-463 (REPIAIVGTS…GTNAHAIVES (452 aa)). Active-site for beta-ketoacyl synthase activity residues include cysteine 202, histidine 341, and histidine 383. A malonyl-CoA:ACP transacylase (MAT) domain region spans residues 571–866 (VFTGQGAQWA…LEVGPHPALK (296 aa)). The tract at residues 967–1110 (HELLGRSVSH…GRIRLWLEQP (144 aa)) is N-terminal hotdog fold. Positions 967-1270 (HELLGRSVSH…GVQMTAIGKP (304 aa)) are dehydratase (DH) domain. One can recognise a PKS/mFAS DH domain in the interval 967–1273 (HELLGRSVSH…MTAIGKPPDR (307 aa)). The active-site Proton acceptor; for dehydratase activity is the histidine 1001. The C-terminal hotdog fold stretch occupies residues 1125 to 1273 (MSELNMAQVY…MTAIGKPPDR (149 aa)). Aspartate 1183 serves as the catalytic Proton donor; for dehydratase activity. Residues 1431-1604 (LGAIVKQLGH…KTTGFSGVDI (174 aa)) form a C-methyltransferase (CMeT) domain region. A ketoreductase (KR) domain region spans residues 2118–2293 (SYLLFGMTGD…AGSIVHISVL (176 aa)). The Carrier domain occupies 2404-2479 (PILEKRFAQA…RVCDDVLVDW (76 aa)). Serine 2438 is subject to O-(pantetheine 4'-phosphoryl)serine.

Functionally, highly reducing polyketide synthase; part of the gene cluster that mediates the biosynthesis of fujikurins A-D, secondary metabolites playing a role during rice infection. The polyketide synthase PKS19 acts with the trans-enoyl reductase FFUJ_12240 and the polyketide transferase FFUJ_12241 to produce fujikurins, however, the biosynthesis pathway has not been identified yet. The chain is Polyketide synthase 19 from Gibberella fujikuroi (strain CBS 195.34 / IMI 58289 / NRRL A-6831) (Bakanae and foot rot disease fungus).